A 342-amino-acid chain; its full sequence is Hypoxia responsive morphology factor C (342 aa).

Positions 46-68 (RMKIPRRKSEYSSHDRLKRARKI) match the Bipartite nuclear localization signal motif. The RNA recognition motif (RRM)-like domain stretch occupies residues 151–181 (ADDAWAYNAADMDTAVKFFSEAIYKAIESSP).

It belongs to the hrmA family.

The protein localises to the nucleus. Its function is as follows. Probably modulates the generation of the hypoxia-typic morphotype (called H-MORPH) with altered biofilm architecture that leads to increased host inflammation, rapid disease progression, and mortality in a murine model of invasive aspergillosis. This is Hypoxia responsive morphology factor C from Aspergillus fumigatus (strain CBS 144.89 / FGSC A1163 / CEA10) (Neosartorya fumigata).